Reading from the N-terminus, the 407-residue chain is P2X receptor D (407 aa).

At Met1 to Leu22 the chain is on the cytoplasmic side. A helical transmembrane segment spans residues Gly23 to Ile43. The Lumenal portion of the chain corresponds to Tyr44–Asn300. A pore-forming motif region spans residues Arg283 to Ile296. Residues Phe301 to Leu321 form a helical membrane-spanning segment. Residues Val322–Leu407 are Cytoplasmic-facing. The interval Lys371 to Asn394 is disordered. A compositionally biased stretch (acidic residues) spans Asp381 to Asp391.

It belongs to the P2X receptor family.

It localises to the contractile vacuole membrane. Functionally, P2X receptors are ligand-gated ion channels that play a role in intracellular calcium signaling. ATP does not evoke inward currents in p2xD. Not essential for osmoregulation. The protein is P2X receptor D (p2xD) of Dictyostelium discoideum (Social amoeba).